The following is an 80-amino-acid chain: MPFQFGTQPRRFPVEGGDSSIELEPGLSSSAACNGKEMSPTRQLRRCPGSHCLTITDVPVTVYATTRKPPAQSSKEMHPK.

Residues M1 to L44 form a disordered region.

It belongs to the FAM229 family.

This is Protein FAM229B (FAM229B) from Homo sapiens (Human).